A 736-amino-acid chain; its full sequence is ATP-dependent zinc metalloprotease FtsH (736 aa).

2 disordered regions span residues 1–39 (MDSN…GQQR) and 57–83 (QQTQ…RKKM). At 1–87 (MDSNVDSQRV…ADRKKMPPGK (87 aa)) the chain is on the cytoplasmic side. The segment covering 57–73 (QQTQNRTGFASADTKQG) has biased composition (polar residues). Residues 88 to 108 (AWLWFVLILIVNFLMVRLLIP) traverse the membrane as a helical segment. Residues 109 to 205 (DAEQPVMVPY…KPIHEERSPW (97 aa)) are Periplasmic-facing. A helical membrane pass occupies residues 206–226 (ATIVYSFGPGLLFIAFYIWLF). The Cytoplasmic segment spans residues 227-736 (RRMAQQGGLG…VSLPGVAGPS (510 aa)). 301–308 (GAPGTGKT) contributes to the ATP binding site. His-522 contacts Zn(2+). Glu-523 is an active-site residue. Residues His-526 and Asp-598 each contribute to the Zn(2+) site. The interval 706 to 736 (PALDAGKLPVPDGGDKNAEPSVSLPGVAGPS) is disordered.

The protein in the central section; belongs to the AAA ATPase family. It in the C-terminal section; belongs to the peptidase M41 family. As to quaternary structure, homohexamer. Zn(2+) is required as a cofactor.

It localises to the cell inner membrane. Its function is as follows. Acts as a processive, ATP-dependent zinc metallopeptidase for both cytoplasmic and membrane proteins. Plays a role in the quality control of integral membrane proteins. This chain is ATP-dependent zinc metalloprotease FtsH, found in Syntrophus aciditrophicus (strain SB).